The primary structure comprises 109 residues: MYSFHISATLGASLYCRSNHFEALEIDSWESSNVFNLVVNCSEEKGIPSILILDYCFLQIFYLFVKTFFACTYIIMLAFQVYIFLKEKNNFFIFRYKTEPLYILRWLRS.

The helical transmembrane segment at 63-85 (LFVKTFFACTYIIMLAFQVYIFL) threads the bilayer.

The protein localises to the membrane. This is an uncharacterized protein from Saccharomyces cerevisiae (strain ATCC 204508 / S288c) (Baker's yeast).